The sequence spans 350 residues: Probable aldo-keto reductase 1 (350 aa).

Catalysis depends on Tyr67, which acts as the Proton donor. Position 135 (His135) interacts with substrate. 214–224 (SPLGKGFFSSG) provides a ligand contact to NADP(+).

Belongs to the aldo/keto reductase family.

This chain is Probable aldo-keto reductase 1, found in Oryza sativa subsp. indica (Rice).